The chain runs to 835 residues: Leucine--tRNA ligase (835 aa).

The short motif at 44 to 54 (PYPSGNIHMGH) is the 'HIGH' region element. The 'KMSKS' region signature appears at 587 to 591 (KMSKS). Lys-590 contacts ATP.

It belongs to the class-I aminoacyl-tRNA synthetase family.

Its subcellular location is the cytoplasm. The enzyme catalyses tRNA(Leu) + L-leucine + ATP = L-leucyl-tRNA(Leu) + AMP + diphosphate. The chain is Leucine--tRNA ligase from Lawsonia intracellularis (strain PHE/MN1-00).